We begin with the raw amino-acid sequence, 191 residues long: MRISKISRKTKETDIQLEINLDGKGTADVSTGIGFFDHMLSSFARHAEFDLKVRAEGDLYVDEHHLIEDTGIVLGKALAEALGDMAGIARFGEARIPMDEALAEVALDVGGRSYLVMKADFIAPQVGQFSTQLVKHFFETVASNAKITIHASVYGDNDHHKIEALFKAFAYAMKRAVKIEGKEVKSTKGTL.

Belongs to the imidazoleglycerol-phosphate dehydratase family.

The protein localises to the cytoplasm. It catalyses the reaction D-erythro-1-(imidazol-4-yl)glycerol 3-phosphate = 3-(imidazol-4-yl)-2-oxopropyl phosphate + H2O. It participates in amino-acid biosynthesis; L-histidine biosynthesis; L-histidine from 5-phospho-alpha-D-ribose 1-diphosphate: step 6/9. This Methanosarcina mazei (strain ATCC BAA-159 / DSM 3647 / Goe1 / Go1 / JCM 11833 / OCM 88) (Methanosarcina frisia) protein is Imidazoleglycerol-phosphate dehydratase.